A 143-amino-acid polypeptide reads, in one-letter code: Transcriptional regulator MraZ (143 aa).

SpoVT-AbrB domains are found at residues 5 to 47 and 76 to 119; these read QYEH…SLEE and AVEC…SKEV.

This sequence belongs to the MraZ family. Forms oligomers.

Its subcellular location is the cytoplasm. It localises to the nucleoid. This is Transcriptional regulator MraZ from Thermoanaerobacter sp. (strain X514).